The following is a 420-amino-acid chain: Histidine--tRNA ligase (420 aa).

The protein belongs to the class-II aminoacyl-tRNA synthetase family. Homodimer.

The protein localises to the cytoplasm. The catalysed reaction is tRNA(His) + L-histidine + ATP = L-histidyl-tRNA(His) + AMP + diphosphate + H(+). In Thermotoga maritima (strain ATCC 43589 / DSM 3109 / JCM 10099 / NBRC 100826 / MSB8), this protein is Histidine--tRNA ligase (hisS).